A 640-amino-acid polypeptide reads, in one-letter code: Threonine--tRNA ligase (640 aa).

The catalytic stretch occupies residues 224 to 525 (DHRKLGKELD…LTEHYAGAFP (302 aa)). C323, H374, and H502 together coordinate Zn(2+).

This sequence belongs to the class-II aminoacyl-tRNA synthetase family. As to quaternary structure, homodimer. Zn(2+) is required as a cofactor.

The protein localises to the cytoplasm. The catalysed reaction is tRNA(Thr) + L-threonine + ATP = L-threonyl-tRNA(Thr) + AMP + diphosphate + H(+). Its function is as follows. Catalyzes the attachment of threonine to tRNA(Thr) in a two-step reaction: L-threonine is first activated by ATP to form Thr-AMP and then transferred to the acceptor end of tRNA(Thr). Also edits incorrectly charged L-seryl-tRNA(Thr). In Tropheryma whipplei (strain Twist) (Whipple's bacillus), this protein is Threonine--tRNA ligase.